The following is a 381-amino-acid chain: MYQKILIRYGELTLKGQNKRDFINDLKRNLMFHIPKEQIKMEYDRAFLDFSLTNLDALKYVFGISSYSCVYEVESSLAAITSKVLDIAKQKYPFKTFAIAARRHNKNFEMNSNDLNRHLGCAILSNFEVKVNLEEPDLKIYVEVRDASTYIFIDYIAGLGGMPLNSAGQVLHLMSGGIDSPVAAYLLQKRGLRINFLNFITPPHTDEKTTQKVDELIKVIAKYQGSAKLYQVNFTDIMNYIGLVSNQKYKIILMRRSFYRIAQMLAKKLHIKALSNGENLAQVASQTLEAIHTVSAPITLPIFRPLLSFDKNETIKIAEKIGTMPISILKACETCELFAPKNPIIKPTPEEASELEKELDKLPELEKLAVENVTIKTISTL.

Positions 52–155 (LTNLDALKYV…DASTYIFIDY (104 aa)) constitute a THUMP domain. ATP contacts are provided by residues 173–174 (LM), 198–199 (NF), R255, G277, and Q286.

The protein belongs to the ThiI family.

It is found in the cytoplasm. The catalysed reaction is [ThiI sulfur-carrier protein]-S-sulfanyl-L-cysteine + a uridine in tRNA + 2 reduced [2Fe-2S]-[ferredoxin] + ATP + H(+) = [ThiI sulfur-carrier protein]-L-cysteine + a 4-thiouridine in tRNA + 2 oxidized [2Fe-2S]-[ferredoxin] + AMP + diphosphate. It carries out the reaction [ThiS sulfur-carrier protein]-C-terminal Gly-Gly-AMP + S-sulfanyl-L-cysteinyl-[cysteine desulfurase] + AH2 = [ThiS sulfur-carrier protein]-C-terminal-Gly-aminoethanethioate + L-cysteinyl-[cysteine desulfurase] + A + AMP + 2 H(+). Its pathway is cofactor biosynthesis; thiamine diphosphate biosynthesis. Functionally, catalyzes the ATP-dependent transfer of a sulfur to tRNA to produce 4-thiouridine in position 8 of tRNAs, which functions as a near-UV photosensor. Also catalyzes the transfer of sulfur to the sulfur carrier protein ThiS, forming ThiS-thiocarboxylate. This is a step in the synthesis of thiazole, in the thiamine biosynthesis pathway. The sulfur is donated as persulfide by IscS. In Metamycoplasma arthritidis (strain 158L3-1) (Mycoplasma arthritidis), this protein is Probable tRNA sulfurtransferase.